The primary structure comprises 135 residues: MSCQGPVCTNLGLKPGQRLTVKGIIAPNAKSFVMNLGKDSTHLGLHFNPRFDAHGDVNLIVCNSKKMEEWGTEQRETVFPFQKGAPIEITFSINPSDLTVHLPGHQFSFPNRLGLSVFDYFDTHGDFTLRSVSWE.

N-acetylserine is present on Ser-2. Cys-3 and Cys-8 are disulfide-bonded. One can recognise a Galectin domain in the interval 5–135 (GPVCTNLGLK…DFTLRSVSWE (131 aa)). Residues 46-50 (HFNPR), His-54, Asn-63, 70-73 (WGTE), and 70-76 (WGTEQRE) contribute to the a beta-D-galactoside site.

As to quaternary structure, homodimer; disulfide-linked. In terms of assembly, (Microbial infection) Interacts with newcastle disease virus protein HN; this interaction inhibits viral adsorption rather than internalization. Mainly in the intestine (adult), mainly in the skin (embryo).

Its function is as follows. This protein binds beta-galactoside. May participate in host antiviral defense through specific interaction with glycans on the viral envelope glycoproteins. This chain is Beta-galactoside-binding lectin (CG-1B), found in Gallus gallus (Chicken).